Reading from the N-terminus, the 102-residue chain is Urease subunit beta (102 aa).

The protein belongs to the urease beta subunit family. In terms of assembly, heterotrimer of UreA (gamma), UreB (beta) and UreC (alpha) subunits. Three heterotrimers associate to form the active enzyme.

The protein localises to the cytoplasm. It catalyses the reaction urea + 2 H2O + H(+) = hydrogencarbonate + 2 NH4(+). Its pathway is nitrogen metabolism; urea degradation; CO(2) and NH(3) from urea (urease route): step 1/1. This is Urease subunit beta from Blochmanniella pennsylvanica (strain BPEN).